The sequence spans 332 residues: Serpentine receptor class gamma-3 (332 aa).

The next 7 helical transmembrane spans lie at Phe23–Ser43, Leu72–Val92, Ile101–Ala121, Ile144–Asp164, Trp184–Val204, Ala231–Phe251, and Tyr263–Val283.

It belongs to the nematode receptor-like protein srg family.

Its subcellular location is the membrane. The chain is Serpentine receptor class gamma-3 (srg-3) from Caenorhabditis elegans.